Reading from the N-terminus, the 483-residue chain is Regulatory protein ViaA (483 aa).

The protein belongs to the ViaA family. Homodimer. Interacts with RavA.

The protein resides in the cytoplasm. Functionally, component of the RavA-ViaA chaperone complex, which may act on the membrane to optimize the function of some of the respiratory chains. ViaA stimulates the ATPase activity of RavA. The protein is Regulatory protein ViaA of Escherichia coli O81 (strain ED1a).